Consider the following 250-residue polypeptide: ATP synthase subunit a (250 aa).

The next 6 membrane-spanning stretches (helical) occupy residues 26-46 (FTNASLFMVATVGAAAGFLYL), 84-104 (FFPMVFSLFMFILTANLLGMV), 114-134 (IIVTFALAVFVIGTVLLYGFY), 143-163 (LFVPQGVPGALLPLVVAIEII), 193-213 (FVASLSAFGALGIGGAILPLI), and 216-236 (VALTGLEFLVAFLQAYVFAVL).

The protein belongs to the ATPase A chain family. F-type ATPases have 2 components, CF(1) - the catalytic core - and CF(0) - the membrane proton channel. CF(1) has five subunits: alpha(3), beta(3), gamma(1), delta(1), epsilon(1). CF(0) has three main subunits: a(1), b(2) and c(9-12). The alpha and beta chains form an alternating ring which encloses part of the gamma chain. CF(1) is attached to CF(0) by a central stalk formed by the gamma and epsilon chains, while a peripheral stalk is formed by the delta and b chains.

It is found in the cell inner membrane. Functionally, key component of the proton channel; it plays a direct role in the translocation of protons across the membrane. In Rhizobium meliloti (strain 1021) (Ensifer meliloti), this protein is ATP synthase subunit a.